The chain runs to 387 residues: Homoserine O-succinyltransferase (387 aa).

Residues 49-358 enclose the AB hydrolase-1 domain; the sequence is NAILICHALS…DAEQGHDSFL (310 aa). Ser-156 acts as the Nucleophile in catalysis. Substrate is bound at residue Arg-226. Residues Asp-321 and His-354 contribute to the active site. Asp-355 lines the substrate pocket.

It belongs to the AB hydrolase superfamily. MetX family. In terms of assembly, homodimer.

It is found in the cytoplasm. It catalyses the reaction L-homoserine + succinyl-CoA = O-succinyl-L-homoserine + CoA. Its pathway is amino-acid biosynthesis; L-methionine biosynthesis via de novo pathway; O-succinyl-L-homoserine from L-homoserine: step 1/1. Requires MetW for activity. Its function is as follows. Transfers a succinyl group from succinyl-CoA to L-homoserine, forming succinyl-L-homoserine. The sequence is that of Homoserine O-succinyltransferase from Acinetobacter baylyi (strain ATCC 33305 / BD413 / ADP1).